A 1110-amino-acid chain; its full sequence is MAKFYYSDRRLACWAAGKNPHLGGSIESWLAAIKSDSSFRQTVKEDVQVNRLQPTAVRMFSWKVGSGPIDNPEKCNWHYVLTGEVPAQPTEPVKAREVVVPPVKVIPSPPPVPRPYFRPVGAFAPTRSGFIRATVERLSRKREESRAAALFAELPLEYPQGAPLVVPRGFAAMRWTYHATWRRWYDASDERALRVHPGGPALPPPPPPPPIQKPPSFEERLQAALERQSCARAFALETSLGLNMAWLGTAAIPSTSVCCADGRTTGGQTIAQEADPINHRVTSNTAPGRAQWISERRSALRRREQANSLQSLAAQTDMTFEQARNAYLGAADMVEQGLPLLPPLRNAYAPRGLWRGPSTRANYTLDFRLNGIPTGQNTLEILYNPVADEEMDEYRDRGMSAVVIDALEIAINPFGMPGNPTDLTVVATYGHERNMERAFIGSSSTFLGNGLARAIFFPGLQYSQEEPRRESIIRLYVASTNATVDADSILAAISVGTLRQHIGSLHNRTVASSVHAAQVQGTTLRATMMGNAVVVSPEGSLVTGTPEANVQIGSGSSMRMVGPLAWENVEEPGQTFTIRNRSRSMRVDRNADVGVALPRMSTTTRGLAGRGSVQVPKDCQAGRYLKTLDLRDMVSGFSGIQYEKWITAGLVMPDFKVVIRYPANAFTGITWVMSFDAYNRITSSITTTASPAYTLSVPHWLLHHKNGTTSCDIDYGELCGHAMWFNATTFESPKLHFTCLTGNNKELAADWEFVVELYAEFEAAKTFLGRPNFVYSADAFNGSFKFLTIPPLEYDLSTTSAYKSVSLLLGQTLIDGTHKVYNYNNTLLSYYLGIGGVVKGRVHICSPCTYGIVLRVVSEWNGVTNNWNQLFKYPGCYIGEDGNFEIEIRSPYHRTPLRLLDAQAASAFTSTLNFYAISGPIAPSGETAKMPVVVQIDEIALPDLSVPSFPNDYFLWVDFSAFTVDAEEYVIGSRFFDISSTTSTVHLGDNPFAHMIACHGLHHGILDLKLMWDLEGEFGKSSGGVTITKLCGDKATGMDGASRVCALQNMGCETELYIGNFAGANPNSALSLYSRWLAIKLDKARSMKMLRILCKPRGNFEFYGRTCFRV.

Residues 195–215 are disordered; that stretch reads VHPGGPALPPPPPPPPIQKPP. Pro residues predominate over residues 200–213; the sequence is PALPPPPPPPPIQK.

The protein belongs to the nepoviruses RNA2 polyprotein family. Specific enzymatic cleavages in vivo by the P1 encoded 3C-like protease yield mature proteins.

Its subcellular location is the host cell junction. It localises to the host plasmodesma. It is found in the virion. Its function is as follows. Implicated in RNA2 replication. Could also be required for nematode transmission of the virus. Transports viral genome to neighboring plant cells directly through plasmosdesmata, without any budding. The movement protein allows efficient cell to cell propagation, by bypassing the host cell wall barrier. Acts by forming a tubular structure at the host plasmodesmata, enlarging it enough to allow free passage of virion capsids. The protein is RNA2 polyprotein of Arabis mosaic virus (isolate NW) (ArMV).